A 420-amino-acid polypeptide reads, in one-letter code: Gamma-glutamyl phosphate reductase (420 aa).

The protein belongs to the gamma-glutamyl phosphate reductase family.

It is found in the cytoplasm. The catalysed reaction is L-glutamate 5-semialdehyde + phosphate + NADP(+) = L-glutamyl 5-phosphate + NADPH + H(+). It participates in amino-acid biosynthesis; L-proline biosynthesis; L-glutamate 5-semialdehyde from L-glutamate: step 2/2. Functionally, catalyzes the NADPH-dependent reduction of L-glutamate 5-phosphate into L-glutamate 5-semialdehyde and phosphate. The product spontaneously undergoes cyclization to form 1-pyrroline-5-carboxylate. This chain is Gamma-glutamyl phosphate reductase, found in Streptococcus pneumoniae (strain Hungary19A-6).